The chain runs to 264 residues: ATP synthase subunit a (264 aa).

The next 6 helical transmembrane spans lie at Thr-29–Phe-49, Val-89–Met-109, Asp-134–Ile-154, Ile-177–Leu-197, Leu-208–Val-228, and Leu-235–Val-255.

It belongs to the ATPase A chain family. As to quaternary structure, F-type ATPases have 2 components, CF(1) - the catalytic core - and CF(0) - the membrane proton channel. CF(1) has five subunits: alpha(3), beta(3), gamma(1), delta(1), epsilon(1). CF(0) has three main subunits: a(1), b(2) and c(9-12). The alpha and beta chains form an alternating ring which encloses part of the gamma chain. CF(1) is attached to CF(0) by a central stalk formed by the gamma and epsilon chains, while a peripheral stalk is formed by the delta and b chains.

The protein resides in the cell inner membrane. Functionally, key component of the proton channel; it plays a direct role in the translocation of protons across the membrane. This Shewanella sediminis (strain HAW-EB3) protein is ATP synthase subunit a.